The following is a 232-amino-acid chain: 7-cyano-7-deazaguanine synthase (232 aa).

Position 7–17 (7–17) interacts with ATP; it reads CSGGLDSVSLA. Residues Cys185, Cys193, Cys196, and Cys199 each contribute to the Zn(2+) site.

The protein belongs to the QueC family. The cofactor is Zn(2+).

The catalysed reaction is 7-carboxy-7-deazaguanine + NH4(+) + ATP = 7-cyano-7-deazaguanine + ADP + phosphate + H2O + H(+). It functions in the pathway purine metabolism; 7-cyano-7-deazaguanine biosynthesis. Its function is as follows. Catalyzes the ATP-dependent conversion of 7-carboxy-7-deazaguanine (CDG) to 7-cyano-7-deazaguanine (preQ(0)). This Brucella abortus (strain S19) protein is 7-cyano-7-deazaguanine synthase.